The following is a 400-amino-acid chain: Argininosuccinate synthase (400 aa).

Residues 10 to 18 (AYSGGVDTS) and Ala38 contribute to the ATP site. L-citrulline is bound at residue Tyr89. Gly119 provides a ligand contact to ATP. The L-aspartate site is built by Thr121, Asn125, and Asp126. L-citrulline is bound at residue Asn125. L-citrulline-binding residues include Arg129, Ser177, Ser186, Glu262, and Tyr274.

It belongs to the argininosuccinate synthase family. Type 1 subfamily. In terms of assembly, homotetramer.

The protein resides in the cytoplasm. The enzyme catalyses L-citrulline + L-aspartate + ATP = 2-(N(omega)-L-arginino)succinate + AMP + diphosphate + H(+). It functions in the pathway amino-acid biosynthesis; L-arginine biosynthesis; L-arginine from L-ornithine and carbamoyl phosphate: step 2/3. Its activity is regulated as follows. Activity decreases to 53.9% and 18.4% in the presence of 1 mM and 5 mM arginine, respectively. Activity also decreases to 80.1%, 78.1% and 92.1% in the presence of 5 mM ornithine, lysine and succinate, respectively. Activity does not decrease in the presence of glutamate, glutamine or asparagine. In terms of biological role, catalyzes the condensation of citrulline and aspartate into argininosuccinate, the immediate precursor of arginine. SyArgG is the rate-limiting step in arginine biosynthesis in Synechocystis PCC 6803. The sequence is that of Argininosuccinate synthase from Synechocystis sp. (strain ATCC 27184 / PCC 6803 / Kazusa).